The chain runs to 418 residues: Tektin-1 (418 aa).

3 coiled-coil regions span residues 21–84, 268–308, and 336–383; these read KNQY…LEQL, LKET…DQEG, and RLIK…ENTI. The tract at residues 399–418 is disordered; that stretch reads PRDGDDHGEWAGGSHPEAVC.

This sequence belongs to the tektin family. In terms of assembly, microtubule inner protein component of sperm flagellar doublet microtubules. Ubiquitinated, leading to its degradation. Deubiquitinated by USP16, promoting its stability. Expressed in trachea multiciliated cells.

It is found in the cytoplasm. The protein localises to the cytoskeleton. Its subcellular location is the cilium axoneme. It localises to the flagellum axoneme. Functionally, microtubule inner protein (MIP) part of the dynein-decorated doublet microtubules (DMTs) in cilia and flagellar axoneme. Forms filamentous polymers in the walls of ciliary and flagellar microtubules. The polypeptide is Tektin-1 (TEKT1) (Bos taurus (Bovine)).